Reading from the N-terminus, the 579-residue chain is MNRDNMDTTKRKEDHTKHTTDVIEFYEEGTAASSLNIATEKANSSPSILRRIINRAAWLSKKVDAMGVESTGIQRISPYERGTSKKQFLHVAGLWLSATGGLSSMSSFLLGPLLFGLSFRESLASSLISVTIGCLIAAYCSIMGPQSGCRQMVTARYLFGWWFVKLVALASIIGVMGWSVVNSVVGGEMLAAISNDKVPLWVGIVIVTVCSFLVAIFGIKQVIKVETYLSVPVLTAFLLLYISSSDKYSFVNAYVSKGNLDSSTRKGNWMSFFSLCYSITATWGSITADYYILFPEDTPYIQIFCLTFFGTFLPTCFVGILGLLLASVAMSYKPWSVEYDSHGMGGLLWAGFQRWNGFGKFCVVVLVFSLVSNNIINTYSAAFSIQLSSVFCAKIPRWFWSIVCTIICLVCALIGRNHFSTILGNFLPMIGYWISMYFILLFEENLVFRRFFLHLYTKEFPTVTGEINGPELVGSSKEVEKDAVTNIHLLKRKHKVTKHRYNWDKWEDYEVLTHGYAATFAFIVGVAGVVVGMAQAYWIGPIAAKFGEYGGDVAMWLSMAFSGVVYPPCRYLELRKFGR.

12 consecutive transmembrane segments (helical) span residues 99–119 (TGGLSSMSSFLLGPLLFGLSF), 123–143 (LASSLISVTIGCLIAAYCSIM), 158–178 (LFGWWFVKLVALASIIGVMGW), 199–219 (PLWVGIVIVTVCSFLVAIFGI), 222–242 (VIKVETYLSVPVLTAFLLLYI), 275–295 (LCYSITATWGSITADYYILFP), 303–323 (IFCLTFFGTFLPTCFVGILGL), 363–383 (VVVLVFSLVSNNIINTYSAAF), 395–415 (IPRWFWSIVCTIICLVCALIG), 422–442 (ILGNFLPMIGYWISMYFILLF), 520–540 (FAFIVGVAGVVVGMAQAYWIG), and 546–566 (FGEYGGDVAMWLSMAFSGVVY).

The protein belongs to the purine-cytosine permease (2.A.39) family.

Its subcellular location is the membrane. In terms of biological role, thiamine-regulated, high affinity import carrier of pyridoxine, pyridoxal and pyridoxamine. The chain is Vitamin B6 transporter TPN1 (TPN1) from Saccharomyces cerevisiae (Baker's yeast).